Consider the following 105-residue polypeptide: Cuticle protein AMP1B (105 aa).

The tract at residues 1-21 (DRDAQTLTDERSDQGDGNFRY) is disordered. Residues 16-81 (DGNFRYEFET…PSSDLLPVPP (66 aa)) form the Chitin-binding type R&amp;R domain.

In terms of tissue distribution, arthrodial membrane.

The protein is Cuticle protein AMP1B of Homarus americanus (American lobster).